Here is a 60-residue protein sequence, read N- to C-terminus: Bacteriochlorophyll c-binding protein (60 aa).

Met1 is modified (N-formylmethionine). His25 serves as a coordination point for a bacteriochlorophyll c.

It belongs to the BChl C/E-binding protein family.

Its subcellular location is the chlorosome. It is found in the chlorosome envelope. Its function is as follows. Component of the photosynthetic apparatus. The light harvesting B740 complex binds bacteriochlorophyll c. This chain is Bacteriochlorophyll c-binding protein (csmA), found in Pelodictyon luteolum.